The primary structure comprises 567 residues: GBF-interacting protein 1 (567 aa).

3 disordered regions span residues 70-150 (ERKK…PSGI), 164-192 (DKVDTEEQPLSKATSSSKDVVEPDKSKES), and 545-567 (PIGPSHVTNQQPQAARTNLGNNY). Polar residues-rich tracts occupy residues 91–102 (FASSYTDASNGR) and 121–136 (TASSAPNNARNDTKPS). The segment covering 182–191 (DVVEPDKSKE) has biased composition (basic and acidic residues). Positions 550–567 (HVTNQQPQAARTNLGNNY) are enriched in polar residues.

It belongs to the GIP1 family. As to quaternary structure, monomer, homodimer, homooligomer. Under non-reducing conditions, predominantly present in high molecular weight forms, but predominates in low molecular weight monomers under reducing conditions. Interacts with BZIP16, BZIP68 and GBF1. Interacts with LBD18. As to expression, expressed in roots, leaves, stems and flowers.

The protein localises to the nucleus. Plant specific protein that enhances G-box-binding factor (GBF) DNA binding activity. May function as a nuclear chaperone or lever and regulate the multimeric state of GBFs. May contribute to bZIP-mediated gene regulation. Is able to refold denatured rhodanese in vitro. Reduces DNA-binding activity of BZIP16, BZIP68 and GBF1 under non-reducing conditions through direct physical interaction. Acts as a negative co-regulator in red and blue light-mediated hypocotyl elongation. Functions to promote hypocotyl elongation during the early stages of seedling development by regulating the repression effect by BZIP16 and the activation effect by BZIP68 and GBF1 on LHCB2.4 expression. Enhances transcriptional activity of LBD18 in the EXP14 promoter. May act as a transcriptional coactivator of LBD18. This Arabidopsis thaliana (Mouse-ear cress) protein is GBF-interacting protein 1.